The following is a 627-amino-acid chain: Transducer protein MpcT (627 aa).

A run of 2 helical transmembrane segments spans residues 28-48 (MLTA…LTVF) and 55-75 (LIGV…TYLI). 2 HAMP domains span residues 78 to 132 (ADFV…VASR) and 192 to 247 (EQLR…DTIS). A Methyl-accepting transducer domain is found at 266-502 (RVDAVADRSA…DVVGMVEEVA (237 aa)). Residues Glu310, Glu416, and Glu507 each carry the glutamate methyl ester (Glu) modification. Disordered stretches follow at residues 505-527 (SEET…DATD) and 557-627 (GTAD…ADSQ). The span at 580–590 (AAAVVDQPQPA) shows a compositional bias: low complexity.

Belongs to the methyl-accepting chemotaxis (MCP) protein family. Interacts with CheA, CheY and CheW1. Methylated by CheR.

The protein localises to the cell membrane. Mediates bacteriorhodopsin- and halorhodopsin-dependent photoresponses by detecting membrane potential changes. Probably transduces the signal to the histidine kinase CheA. The chain is Transducer protein MpcT (mpcT) from Halobacterium salinarum (strain ATCC 29341 / DSM 671 / R1).